A 161-amino-acid polypeptide reads, in one-letter code: Xanthine-guanine phosphoribosyltransferase (161 aa).

Residues 41-42 and 95-103 each bind 5-phospho-alpha-D-ribose 1-diphosphate; these read RG and DDLVDTGNT. Position 96 (aspartate 96) interacts with Mg(2+). Residues aspartate 99 and isoleucine 142 each contribute to the guanine site. Aspartate 99 and isoleucine 142 together coordinate xanthine. GMP is bound by residues 99-103 and 141-142; these read DTGNT and WI.

Belongs to the purine/pyrimidine phosphoribosyltransferase family. XGPT subfamily. Homotetramer. It depends on Mg(2+) as a cofactor.

It is found in the cell inner membrane. The catalysed reaction is GMP + diphosphate = guanine + 5-phospho-alpha-D-ribose 1-diphosphate. The enzyme catalyses XMP + diphosphate = xanthine + 5-phospho-alpha-D-ribose 1-diphosphate. It carries out the reaction IMP + diphosphate = hypoxanthine + 5-phospho-alpha-D-ribose 1-diphosphate. Its pathway is purine metabolism; GMP biosynthesis via salvage pathway; GMP from guanine: step 1/1. It participates in purine metabolism; XMP biosynthesis via salvage pathway; XMP from xanthine: step 1/1. Its function is as follows. Purine salvage pathway enzyme that catalyzes the transfer of the ribosyl-5-phosphate group from 5-phospho-alpha-D-ribose 1-diphosphate (PRPP) to the N9 position of the 6-oxopurines guanine and xanthine to form the corresponding ribonucleotides GMP (guanosine 5'-monophosphate) and XMP (xanthosine 5'-monophosphate), with the release of PPi. To a lesser extent, also acts on hypoxanthine. The protein is Xanthine-guanine phosphoribosyltransferase of Idiomarina loihiensis (strain ATCC BAA-735 / DSM 15497 / L2-TR).